The chain runs to 336 residues: F420-dependent glucose-6-phosphate dehydrogenase (336 aa).

Asp-39 contributes to the coenzyme F420-(gamma-Glu)n binding site. The active-site Proton donor is His-40. Coenzyme F420-(gamma-Glu)n is bound by residues Thr-76 and Ser-107 to Gly-108. The active-site Proton acceptor is the Glu-109. Coenzyme F420-(gamma-Glu)n-binding positions include Asn-112, Gly-177–Gly-178, and Val-180–Val-181. 4 residues coordinate substrate: Thr-195, Lys-198, Lys-259, and Arg-283.

It belongs to the F420-dependent glucose-6-phosphate dehydrogenase family. In terms of assembly, homodimer.

It catalyses the reaction oxidized coenzyme F420-(gamma-L-Glu)(n) + D-glucose 6-phosphate + H(+) = 6-phospho-D-glucono-1,5-lactone + reduced coenzyme F420-(gamma-L-Glu)(n). Its function is as follows. Catalyzes the coenzyme F420-dependent oxidation of glucose 6-phosphate (G6P) to 6-phosphogluconolactone. This chain is F420-dependent glucose-6-phosphate dehydrogenase, found in Tsukamurella paurometabola (strain ATCC 8368 / DSM 20162 / CCUG 35730 / CIP 100753 / JCM 10117 / KCTC 9821 / NBRC 16120 / NCIMB 702349 / NCTC 13040) (Corynebacterium paurometabolum).